Consider the following 207-residue polypeptide: Guanylate kinase (207 aa).

Residues 4 to 184 (GTLYIVSAPS…ALSDLKTIIR (181 aa)) form the Guanylate kinase-like domain. 11 to 18 (APSGAGKS) serves as a coordination point for ATP.

The protein belongs to the guanylate kinase family.

The protein resides in the cytoplasm. It catalyses the reaction GMP + ATP = GDP + ADP. Essential for recycling GMP and indirectly, cGMP. The sequence is that of Guanylate kinase from Yersinia pestis bv. Antiqua (strain Antiqua).